Here is a 398-residue protein sequence, read N- to C-terminus: 8-amino-7-oxononanoate synthase (398 aa).

Position 23 (R23) interacts with substrate. 110–111 is a pyridoxal 5'-phosphate binding site; it reads GY. H135 is a substrate binding site. 3 residues coordinate pyridoxal 5'-phosphate: S181, H209, and T237. At K240 the chain carries N6-(pyridoxal phosphate)lysine. T354 provides a ligand contact to substrate.

The protein belongs to the class-II pyridoxal-phosphate-dependent aminotransferase family. BioF subfamily. In terms of assembly, homodimer. It depends on pyridoxal 5'-phosphate as a cofactor.

It carries out the reaction 6-carboxyhexanoyl-[ACP] + L-alanine + H(+) = (8S)-8-amino-7-oxononanoate + holo-[ACP] + CO2. The protein operates within cofactor biosynthesis; biotin biosynthesis. Its function is as follows. Catalyzes the decarboxylative condensation of pimeloyl-[acyl-carrier protein] and L-alanine to produce 8-amino-7-oxononanoate (AON), [acyl-carrier protein], and carbon dioxide. The protein is 8-amino-7-oxononanoate synthase of Anaeromyxobacter sp. (strain K).